Reading from the N-terminus, the 892-residue chain is Translation initiation factor IF-2 (892 aa).

Residues 138–185 are compositionally biased toward basic and acidic residues; the sequence is QRNLAEQQRLAEVDRQRVEEQERKRREEEQAELERQKTESRVVEEILV. Disordered regions lie at residues 138 to 250 and 262 to 298; these read QRNL…EDDS and AAER…SGAH. Low complexity predominate over residues 207 to 219; the sequence is LPRTVRPTPAARP. Residues 391-560 enclose the tr-type G domain; that stretch reads PRPPVVTIMG…SIQAEVLELK (170 aa). Residues 400 to 407, 446 to 450, and 500 to 503 each bind GTP; these read GHVDHGKT, DTPGH, and SKID.

The protein belongs to the TRAFAC class translation factor GTPase superfamily. Classic translation factor GTPase family. IF-2 subfamily.

Its subcellular location is the cytoplasm. In terms of biological role, one of the essential components for the initiation of protein synthesis. Protects formylmethionyl-tRNA from spontaneous hydrolysis and promotes its binding to the 30S ribosomal subunits. Also involved in the hydrolysis of GTP during the formation of the 70S ribosomal complex. The chain is Translation initiation factor IF-2 from Xylella fastidiosa (strain Temecula1 / ATCC 700964).